The following is a 219-amino-acid chain: Glycosylphosphatidylinositol anchor biosynthesis protein 11 (219 aa).

Residues 1–45 (MPAKKRTRKTVKKTVSFSDDTTLTTHQNREKKNVDHDRPPVYVRK) are Cytoplasmic-facing. Serine 16 is modified (phosphoserine). The chain crosses the membrane as a helical span at residues 46–66 (TPLMTFPYHLVALLYYYVFVS). Serine 67 is a topological domain (lumenal). A helical membrane pass occupies residues 68 to 88 (NFNTVKLLSFLIPTQVAYLVL). Over 89–108 (QFNKCTVYGNKIIKINYSLT) the chain is Cytoplasmic. The chain crosses the membrane as a helical span at residues 109–129 (IICLGVTFLLSFPTMLLTILF). Topologically, residues 130-135 (GAPLMD) are lumenal. A helical membrane pass occupies residues 136–156 (LLWETWLLSLHFAFLAYPAVY). Residues 157–170 (SVFNCDFKVGLWKK) are Cytoplasmic-facing. The chain crosses the membrane as a helical span at residues 171-191 (YFIFIVVGGWISCVVIPLDWD). Topologically, residues 192-198 (RDWQNWP) are lumenal. The chain crosses the membrane as a helical span at residues 199-217 (IPIVVGGYLGALVGYTIGA). Residues 218-219 (YI) lie on the Cytoplasmic side of the membrane.

Belongs to the PIGF family.

It is found in the endoplasmic reticulum membrane. It participates in glycolipid biosynthesis; glycosylphosphatidylinositol-anchor biosynthesis. Its function is as follows. Acts in the GPI biosynthetic pathway between GlcNAc-PI synthesis and GPI transfer to protein. Required for the formation of complete GPI precursors CP1 and CP2. The protein is Glycosylphosphatidylinositol anchor biosynthesis protein 11 (GPI11) of Saccharomyces cerevisiae (strain ATCC 204508 / S288c) (Baker's yeast).